Reading from the N-terminus, the 210-residue chain is Outer-membrane lipoprotein LolB (210 aa).

The N-terminal stretch at 1–29 is a signal peptide; that stretch reads MSLISNNEERSLRVRYCIAIALSALLISG. C30 carries the N-palmitoyl cysteine lipid modification. The S-diacylglycerol cysteine moiety is linked to residue C30.

The protein belongs to the LolB family. In terms of assembly, monomer.

It localises to the cell outer membrane. Plays a critical role in the incorporation of lipoproteins in the outer membrane after they are released by the LolA protein. The polypeptide is Outer-membrane lipoprotein LolB (Coxiella burnetii (strain CbuG_Q212) (Coxiella burnetii (strain Q212))).